Reading from the N-terminus, the 222-residue chain is UPF0758 protein HSM_0009 (222 aa).

The 124-residue stretch at 99-222 (QEFTSPDTVR…YFSFAEQGWI (124 aa)) folds into the MPN domain. Residues His-171, His-173, and Asp-184 each coordinate Zn(2+). A JAMM motif motif is present at residues 171–184 (HNHPSGVSTPSMAD).

The protein belongs to the UPF0758 family.

This is UPF0758 protein HSM_0009 from Histophilus somni (strain 2336) (Haemophilus somnus).